The chain runs to 235 residues: Glucosamine-6-phosphate deaminase (235 aa).

The Proton acceptor; for enolization step role is filled by Asp62. Residue Asn128 is the For ring-opening step of the active site. The active-site Proton acceptor; for ring-opening step is His130. Glu135 functions as the For ring-opening step in the catalytic mechanism.

This sequence belongs to the glucosamine/galactosamine-6-phosphate isomerase family. NagB subfamily.

The enzyme catalyses alpha-D-glucosamine 6-phosphate + H2O = beta-D-fructose 6-phosphate + NH4(+). Its pathway is amino-sugar metabolism; N-acetylneuraminate degradation; D-fructose 6-phosphate from N-acetylneuraminate: step 5/5. In terms of biological role, catalyzes the reversible isomerization-deamination of glucosamine 6-phosphate (GlcN6P) to form fructose 6-phosphate (Fru6P) and ammonium ion. The protein is Glucosamine-6-phosphate deaminase of Lactococcus lactis subsp. cremoris (strain SK11).